The primary structure comprises 254 residues: MGELRIGKVEKYIHEKLEKKKLHFVLIDPDDTSPEVAGKLARVCEELGVDAIMVGGSTGAEGEVLDNVVRSIKDNSSLPVILFPGSHGGISRYADAIFFMSLLNSRNPFFITGAQALGAFTVKKFGIEPIPMAYIVVEPGETVGWVGDARPIPRHKPKLAAAYALAGQYLGMRLVYLEAGSGAPEPVPEEMVRVVKSVIDVPLIVGGGIKSGEQAKKLIKSGADIIVTGTAIEKAKSLEEARKRLEAIRNGVFV.

Mg(2+)-binding residues include aspartate 28 and serine 57. Sn-glycerol 1-phosphate contacts are provided by residues 176–182 (YLEAGSG), 207–208 (GG), and 229–230 (GT).

It belongs to the GGGP/HepGP synthase family. Group II subfamily. Mg(2+) is required as a cofactor.

It is found in the cytoplasm. It carries out the reaction sn-glycerol 1-phosphate + (2E,6E,10E)-geranylgeranyl diphosphate = sn-3-O-(geranylgeranyl)glycerol 1-phosphate + diphosphate. It participates in membrane lipid metabolism; glycerophospholipid metabolism. Prenyltransferase that catalyzes the transfer of the geranylgeranyl moiety of geranylgeranyl diphosphate (GGPP) to the C3 hydroxyl of sn-glycerol-1-phosphate (G1P). This reaction is the first ether-bond-formation step in the biosynthesis of archaeal membrane lipids. The sequence is that of Geranylgeranylglyceryl phosphate synthase from Pyrococcus horikoshii (strain ATCC 700860 / DSM 12428 / JCM 9974 / NBRC 100139 / OT-3).